A 178-amino-acid chain; its full sequence is Fatty-acid and retinol-binding protein 1 (178 aa).

The first 16 residues, 1-16 (MYHRLILLALVGTTMA), serve as a signal peptide directing secretion. Coiled-coil stretches lie at residues 67–89 (DAAL…ELRN) and 130–153 (KQAA…ELKV).

This sequence belongs to the fatty-acid and retinol-binding protein (FARBP) family. In terms of processing, not glycosylated.

The protein resides in the secreted. Functionally, binds retinol. Also binds the fluorescent fatty acid 11-((5-dimethylaminonaphthalene-1-sulfonyl)amino)undecanoic acid (DAUDA). The long chain fatty acid oleic acid can act competitively to displace bound DAUDA and retinol. The protein is Fatty-acid and retinol-binding protein 1 of Brugia malayi (Filarial nematode worm).